The primary structure comprises 252 residues: Cell division protein ZapD (252 aa).

The protein belongs to the ZapD family. As to quaternary structure, interacts with FtsZ.

It is found in the cytoplasm. Functionally, cell division factor that enhances FtsZ-ring assembly. Directly interacts with FtsZ and promotes bundling of FtsZ protofilaments, with a reduction in FtsZ GTPase activity. The protein is Cell division protein ZapD of Cupriavidus metallidurans (strain ATCC 43123 / DSM 2839 / NBRC 102507 / CH34) (Ralstonia metallidurans).